The chain runs to 58 residues: Small ribosomal subunit protein bS21 (58 aa).

Positions 36 to 58 (EFYEKPSVKRKRKSEAARKRKKF) are disordered. The span at 43–58 (VKRKRKSEAARKRKKF) shows a compositional bias: basic residues.

This sequence belongs to the bacterial ribosomal protein bS21 family.

This chain is Small ribosomal subunit protein bS21, found in Streptococcus uberis (strain ATCC BAA-854 / 0140J).